The primary structure comprises 113 residues: uncharacterized protein (113 aa).

The HTH hxlR-type domain maps to 16–113; that stretch reads TPFGYTLSLI…CEWGVKNQNN (98 aa).

This is an uncharacterized protein from Halalkalibacterium halodurans (strain ATCC BAA-125 / DSM 18197 / FERM 7344 / JCM 9153 / C-125) (Bacillus halodurans).